A 224-amino-acid polypeptide reads, in one-letter code: Adenosylcobinamide-GDP ribazoletransferase (224 aa).

Transmembrane regions (helical) follow at residues 21–41 (LSFKCVWALPYVAAPIIAAIP), 44–64 (LLYLGASPAIAYIALLAATGL), 97–117 (GGIFAVTAVVVTTAAHLHSPL), and 156–176 (WPAALPALAVLAYLAPVTTAV).

The protein belongs to the CobS family. The cofactor is Mg(2+).

It localises to the cell membrane. The catalysed reaction is alpha-ribazole + adenosylcob(III)inamide-GDP = adenosylcob(III)alamin + GMP + H(+). It carries out the reaction alpha-ribazole 5'-phosphate + adenosylcob(III)inamide-GDP = adenosylcob(III)alamin 5'-phosphate + GMP + H(+). It functions in the pathway cofactor biosynthesis; adenosylcobalamin biosynthesis; adenosylcobalamin from cob(II)yrinate a,c-diamide: step 7/7. Its function is as follows. Joins adenosylcobinamide-GDP and alpha-ribazole to generate adenosylcobalamin (Ado-cobalamin). Also synthesizes adenosylcobalamin 5'-phosphate from adenosylcobinamide-GDP and alpha-ribazole 5'-phosphate. The sequence is that of Adenosylcobinamide-GDP ribazoletransferase from Pyrobaculum aerophilum (strain ATCC 51768 / DSM 7523 / JCM 9630 / CIP 104966 / NBRC 100827 / IM2).